The following is a 301-amino-acid chain: 5'-3' exonuclease (301 aa).

One can recognise a 5'-3' exonuclease domain in the interval 182–264 (GYADLALLRG…RVAADVPLPD (83 aa)).

5'-3' exonuclease acting preferentially on double-stranded DNA. In Streptomyces coelicolor (strain ATCC BAA-471 / A3(2) / M145), this protein is 5'-3' exonuclease.